We begin with the raw amino-acid sequence, 300 residues long: Meiotically up-regulated gene 165 protein (300 aa).

Disordered stretches follow at residues 1-38 (MLEK…HKPS) and 50-109 (TNSS…STLE). Positions 21 to 38 (ESHTFSSQTDDSYFHKPS) are enriched in polar residues. Over residues 52 to 69 (SSVPSASRSPESIASSQS) the composition is skewed to low complexity. The segment covering 94 to 103 (TLRKRGRKPK) has biased composition (basic residues).

The protein resides in the nucleus. Has a role in meiosis. This chain is Meiotically up-regulated gene 165 protein (mug165), found in Schizosaccharomyces pombe (strain 972 / ATCC 24843) (Fission yeast).